The chain runs to 279 residues: Calcium-activated potassium channel subunit beta-3 (279 aa).

Residues 1–60 (MDFSPSSELGFHFVAFILLTRHRTAFPASGKKRETDYSDGDPLDVHKRLPSSAGEDRAVM) lie on the Cytoplasmic side of the membrane. A helical membrane pass occupies residues 61 to 81 (LGFAMMGFSVLMFFLLGTTIL). The Extracellular segment spans residues 82 to 207 (KPFMLSIQRE…DVILIKKYDQ (126 aa)). A glycan (N-linked (GlcNAc...) asparagine) is linked at N131. Residues 208-228 (MAIFHCLFWPSLTLLGGALIV) traverse the membrane as a helical segment. Residues 229–279 (GMVRLTQHLSLLCEKYSTVVRDEVGGKVPYIEQHQFKLCIMRRSKGRAEKS) lie on the Cytoplasmic side of the membrane.

This sequence belongs to the KCNMB (TC 8.A.14.1) family. KCNMB3 subfamily. As to quaternary structure, interacts with KCNMA1 tetramer. There are probably 4 molecules of KCMNB3 per KCNMA1 tetramer. N-glycosylated. Post-translationally, the extracellular domain contains disulfide bond essential for the gating mechanism. As to expression, isoform 1, isoform 3 and isoform 4 are widely expressed. Isoform 2 is expressed placenta, pancreas, kidney and heart. Isoform 1 and isoform 3 are highly expressed in pancreas and testis.

The protein resides in the membrane. In terms of biological role, regulatory subunit of the calcium activated potassium KCNMA1 (maxiK) channel. Modulates the calcium sensitivity and gating kinetics of KCNMA1, thereby contributing to KCNMA1 channel diversity. Alters the functional properties of the current expressed by the KCNMA1 channel. Isoform 2, isoform 3 and isoform 4 partially inactivate the current of KCNBMA. Isoform 4 induces a fast and incomplete inactivation of KCNMA1 channel that is detectable only at large depolarizations. In contrast, isoform 1 does not induce detectable inactivation of KCNMA1. Two or more subunits of KCNMB3 are required to block the KCNMA1 tetramer. The polypeptide is Calcium-activated potassium channel subunit beta-3 (KCNMB3) (Homo sapiens (Human)).